Here is a 444-residue protein sequence, read N- to C-terminus: C4-dicarboxylate transport protein (444 aa).

9 helical membrane-spanning segments follow: residues 15–35 (VIVA…FGVA), 46–66 (LIKM…IAGM), 78–98 (YALL…LIVV), 143–163 (IVGA…VIFG), 199–219 (PIGA…GSLV), 224–244 (LMIC…GGIA), 291–311 (VVGL…AIYL), 332–352 (ITLL…TGSG), and 354–374 (IVLA…LALI). A disordered region spans residues 422-444 (GIADTRPEDDLGVAEGPTPSNVK).

This sequence belongs to the dicarboxylate/amino acid:cation symporter (DAACS) (TC 2.A.23) family.

Its subcellular location is the cell inner membrane. Functionally, responsible for the transport of dicarboxylates such as succinate, fumarate, and malate from the periplasm across the membrane. The chain is C4-dicarboxylate transport protein from Pseudomonas fluorescens (strain Pf0-1).